Reading from the N-terminus, the 383-residue chain is Forkhead box protein I3-B (383 aa).

A compositionally biased stretch (polar residues) spans Met-1–Thr-12. Disordered stretches follow at residues Met-1–Gly-55, Asp-215–Ser-277, and Thr-317–His-348. Residues Pro-25–Tyr-35 are compositionally biased toward low complexity. Residues Arg-130 to Lys-224 constitute a DNA-binding region (fork-head). The short motif at Arg-220–Lys-226 is the Nuclear localization signal element. Low complexity predominate over residues Ser-234–Ser-249. Residues Pro-250 to Ser-277 show a composition bias toward polar residues. Positions Thr-317 to Ser-330 are enriched in low complexity.

Expressed in ionocyte precursors.

It is found in the nucleus. Its function is as follows. Transcription factor required for epithelial cell differentiation. Involved in specification of skin ionocytes from epidermal precursors. This Danio rerio (Zebrafish) protein is Forkhead box protein I3-B.